We begin with the raw amino-acid sequence, 148 residues long: Large ribosomal subunit protein bL9 (148 aa).

The protein belongs to the bacterial ribosomal protein bL9 family.

Binds to the 23S rRNA. This is Large ribosomal subunit protein bL9 from Methylobacillus flagellatus (strain ATCC 51484 / DSM 6875 / VKM B-1610 / KT).